The chain runs to 75 residues: UPF0352 protein plu2871 (75 aa).

It belongs to the UPF0352 family.

In Photorhabdus laumondii subsp. laumondii (strain DSM 15139 / CIP 105565 / TT01) (Photorhabdus luminescens subsp. laumondii), this protein is UPF0352 protein plu2871.